A 180-amino-acid polypeptide reads, in one-letter code: Translation initiation factor IF-3 (180 aa).

This sequence belongs to the IF-3 family. In terms of assembly, monomer.

The protein localises to the cytoplasm. IF-3 binds to the 30S ribosomal subunit and shifts the equilibrium between 70S ribosomes and their 50S and 30S subunits in favor of the free subunits, thus enhancing the availability of 30S subunits on which protein synthesis initiation begins. This is Translation initiation factor IF-3 from Caldanaerobacter subterraneus subsp. tengcongensis (strain DSM 15242 / JCM 11007 / NBRC 100824 / MB4) (Thermoanaerobacter tengcongensis).